The primary structure comprises 475 residues: Sulfate adenylyltransferase subunit 1 (475 aa).

The tr-type G domain maps to 25 to 239 (KSLLRFLTCG…EVLETVEIQR (215 aa)). The interval 34-41 (GSVDDGKS) is G1. GTP is bound at residue 34–41 (GSVDDGKS). The segment at 92 to 96 (GITID) is G2. Residues 113 to 116 (DTPG) form a G3 region. GTP-binding positions include 113 to 117 (DTPGH) and 168 to 171 (NKMD). The segment at 168 to 171 (NKMD) is G4. Residues 206-208 (SAL) are G5.

The protein belongs to the TRAFAC class translation factor GTPase superfamily. Classic translation factor GTPase family. CysN/NodQ subfamily. In terms of assembly, heterodimer composed of CysD, the smaller subunit, and CysN.

The catalysed reaction is sulfate + ATP + H(+) = adenosine 5'-phosphosulfate + diphosphate. It functions in the pathway sulfur metabolism; hydrogen sulfide biosynthesis; sulfite from sulfate: step 1/3. With CysD forms the ATP sulfurylase (ATPS) that catalyzes the adenylation of sulfate producing adenosine 5'-phosphosulfate (APS) and diphosphate, the first enzymatic step in sulfur assimilation pathway. APS synthesis involves the formation of a high-energy phosphoric-sulfuric acid anhydride bond driven by GTP hydrolysis by CysN coupled to ATP hydrolysis by CysD. The sequence is that of Sulfate adenylyltransferase subunit 1 from Escherichia coli (strain UTI89 / UPEC).